A 558-amino-acid chain; its full sequence is Formate--tetrahydrofolate ligase (558 aa).

Position 67-74 (67-74) interacts with ATP; the sequence is TPAGEGKT.

It belongs to the formate--tetrahydrofolate ligase family.

The enzyme catalyses (6S)-5,6,7,8-tetrahydrofolate + formate + ATP = (6R)-10-formyltetrahydrofolate + ADP + phosphate. The protein operates within one-carbon metabolism; tetrahydrofolate interconversion. The polypeptide is Formate--tetrahydrofolate ligase (Ruegeria sp. (strain TM1040) (Silicibacter sp.)).